The sequence spans 198 residues: uncharacterized protein (198 aa).

The tract at residues Gly40 to Pro111 is disordered. Residues Ser60–Arg74 show a composition bias toward low complexity.

This is an uncharacterized protein from Homo sapiens (Human).